Consider the following 460-residue polypeptide: Solute carrier family 52, riboflavin transporter, member 3 (460 aa).

Over 1 to 6 (MAFLTH) the chain is Cytoplasmic. The chain crosses the membrane as a helical span at residues 7 to 27 (LLVCVFGMGSWVAINGLWVEL). Residues 28-37 (PLLVTELPEA) lie on the Extracellular side of the membrane. The chain crosses the membrane as a helical span at residues 38-58 (WYLPSYLTVVIQLANIGPLLV). At 59 to 71 (TLMHRFRPGCLSE) the chain is on the cytoplasmic side. Residues 72 to 92 (VPVIFLILCVGTAACILLAFL) form a helical membrane-spanning segment. At 93–105 (WNVTSWIQGGQHS) the chain is on the extracellular side. The N-linked (GlcNAc...) asparagine glycan is linked to asparagine 94. Residues 106–126 (VAFIVLTFFLALVDCTSSVTF) traverse the membrane as a helical segment. The Cytoplasmic portion of the chain corresponds to 127-137 (LPFMSQLPTYY). Residues 138 to 158 (LTTFFIGEGLSGLLPALVALV) form a helical membrane-spanning segment. Residues 159–211 (QGSGITTCVNVTETPGTTLNTMETPITQGNLSPSLPSPSWHQESRYLAPRFSP) are Extracellular-facing. Asparagine 168 is a glycosylation site (N-linked (GlcNAc...) asparagine). Residues 212 to 232 (LLFFLLLSFLTGCCLVAFFLL) traverse the membrane as a helical segment. Topologically, residues 233 to 291 (QRQPWGRQGSIEDLLHSQVTLHSIRPRDTEDTSSLGAPVSSPGKGSVEASVASLRPAQL) are cytoplasmic. A phosphoserine mark is found at serine 242 and serine 266. A helical membrane pass occupies residues 292–312 (AFIYSVVAFVNALTNGVLPSV). Over 313–326 (QTYSCLPYGPVAYH) the chain is Extracellular. The chain crosses the membrane as a helical span at residues 327–347 (LSATLSSVASPLACFLPIFLP). Residues 348–350 (NRS) are Cytoplasmic-facing. Residues 351 to 371 (LLFLGVLTVLGTGFGAYNMAM) form a helical membrane-spanning segment. Topologically, residues 372–387 (AAMSPCPVLQGHWGGE) are extracellular. An intrachain disulfide couples cysteine 377 to cysteine 454. The helical transmembrane segment at 388-408 (VLIVLSWVLFAACLSYVKVML) threads the bilayer. At 409 to 418 (GVILRDRSRS) the chain is on the cytoplasmic side. Residues 419 to 439 (ALLWCGAAVQLGSLIGALLMF) form a helical membrane-spanning segment. Residues 440–460 (PLVNVLKLFSSADYCSLDCSV) lie on the Extracellular side of the membrane.

It belongs to the riboflavin transporter family. Within the small intestine, it is particularly expressed in the jujenum and the ileum. Almost negligible expression in the stomach, duodenum, and large intestine.

Its subcellular location is the cell membrane. The enzyme catalyses riboflavin(in) = riboflavin(out). Functionally, plasma membrane transporter mediating the uptake by cells of the water soluble vitamin B2/riboflavin that plays a key role in biochemical oxidation-reduction reactions of the carbohydrate, lipid, and amino acid metabolism. This Mus musculus (Mouse) protein is Solute carrier family 52, riboflavin transporter, member 3 (Slc52a3).